The chain runs to 98 residues: NADH-ubiquinone oxidoreductase chain 4L (98 aa).

3 consecutive transmembrane segments (helical) span residues 1-21 (MMPI…GALV), 28-48 (STLL…ALLI), and 59-79 (APLI…ALLV).

It belongs to the complex I subunit 4L family. As to quaternary structure, core subunit of respiratory chain NADH dehydrogenase (Complex I) which is composed of 45 different subunits.

It is found in the mitochondrion inner membrane. The enzyme catalyses a ubiquinone + NADH + 5 H(+)(in) = a ubiquinol + NAD(+) + 4 H(+)(out). Its function is as follows. Core subunit of the mitochondrial membrane respiratory chain NADH dehydrogenase (Complex I) which catalyzes electron transfer from NADH through the respiratory chain, using ubiquinone as an electron acceptor. Part of the enzyme membrane arm which is embedded in the lipid bilayer and involved in proton translocation. This chain is NADH-ubiquinone oxidoreductase chain 4L (MT-ND4L), found in Distoechurus pennatus (Feather-tailed possum).